Consider the following 470-residue polypeptide: MTKTLPEDFIFGGATAAYQAEGATNTDGKGRVAWDTYLEENYWYTAEPASDFYNRYPVDLELSEKFGVNGIRISIAWSRIFPNGYGEVNPKGVEYYHKLFAECHKRHVEPFVTLHHFDTPEVLHKDGDFLNRKTIDYFVDYAEYCFKEFPEVKYWTTFNEIGPIGDGQYLVGKFPPGIKYDFEKVFQSHHNMMVAHARAVKLFKDGGYQGEIGVVHALPTKYPFDPSNPEDVRAAELEDIIHNKFILDATYLGEYSRETMEGVQHILSVNGGKLNITDEDYAILDAAKDLNDFLGINYYMSDWMRGYDGESEITHNATGDKGGSKYQLKGVGQREFDVDVPRTDWDWMIYPQGLYDQIMRVVKDYPNYHKIYITENGLGYKDEFIESEKTVHDDARIDYVRQHLNVIADAIKDGANVKGYFIWSLMDVFSWSNGYEKRYGLFYVDFETQERYPKKSAYWYKELAETKEIK.

Positions 19, 116, 159, 160, and 297 each coordinate D-galactose 6-phosphate. The active-site Proton donor is glutamate 160. Catalysis depends on glutamate 375, which acts as the Nucleophile. 4 residues coordinate D-galactose 6-phosphate: serine 430, tryptophan 431, lysine 437, and tyrosine 439.

Belongs to the glycosyl hydrolase 1 family.

The enzyme catalyses a 6-phospho-beta-D-galactoside + H2O = D-galactose 6-phosphate + an alcohol. It functions in the pathway carbohydrate metabolism; lactose degradation; D-galactose 6-phosphate and beta-D-glucose from lactose 6-phosphate: step 1/1. In Staphylococcus aureus (strain MRSA252), this protein is 6-phospho-beta-galactosidase.